A 57-amino-acid chain; its full sequence is Large ribosomal subunit protein bL32 (57 aa).

This sequence belongs to the bacterial ribosomal protein bL32 family.

The sequence is that of Large ribosomal subunit protein bL32 from Bacillus pumilus (strain SAFR-032).